The following is a 495-amino-acid chain: MEFIKKLEVWFIVGSQDLYGDEALKQVYANAKQITQYLNSRNPFIQIKLKPLATTPEDILAICRAANYEENCAGVIAWMHTFSPAKMWIAGLTRLDKPLLQFHTQFNKYIPWNEIDMDYMNLHQTAHGDREFGFMVSRLRKPRTIVVGHWQSESVKQKLDRWMRVLAAIYDQQHLKVARFGDNMREVAVTEGDKVEAQIKFGYSVNGYGIYQLVNSINAIKEEDIATLVKEYEADYQLVDSLKEGGEKRQSLIDSARIELGLKAFLDKGGFKAFTDTFQNLYGMKQLPGLPVQRLMAQGYGFGAEGDWKTAALVRAIKVMSYGLPNGCSFMEDYTYNLEDHNEVVLAAHMLEVCPSIAEDKPILDIKPLGIGGKEDPTRLIFTSKAGCATASTIVDLGNRFRMITAELQAIAKPQDMPNLPVGHAFWKLEPDFDTGTQAWILAGGAHHNVFSLDIDADMLRTFAEYFGIEFIHIHAKTELADLKNELRWNDVAYK.

Mn(2+)-binding residues include E305, E332, H349, and H448.

It belongs to the arabinose isomerase family. Requires Mn(2+) as cofactor.

The catalysed reaction is beta-L-arabinopyranose = L-ribulose. Its pathway is carbohydrate degradation; L-arabinose degradation via L-ribulose; D-xylulose 5-phosphate from L-arabinose (bacterial route): step 1/3. In terms of biological role, catalyzes the conversion of L-arabinose to L-ribulose. This Actinobacillus succinogenes (strain ATCC 55618 / DSM 22257 / CCUG 43843 / 130Z) protein is L-arabinose isomerase.